We begin with the raw amino-acid sequence, 456 residues long: Argininosuccinate lyase (456 aa).

This sequence belongs to the lyase 1 family. Argininosuccinate lyase subfamily.

It is found in the cytoplasm. It catalyses the reaction 2-(N(omega)-L-arginino)succinate = fumarate + L-arginine. The protein operates within amino-acid biosynthesis; L-arginine biosynthesis; L-arginine from L-ornithine and carbamoyl phosphate: step 3/3. This chain is Argininosuccinate lyase, found in Listeria innocua serovar 6a (strain ATCC BAA-680 / CLIP 11262).